The chain runs to 82 residues: Cytochrome b559 subunit alpha (82 aa).

Residues 22-36 traverse the membrane as a helical segment; that stretch reads IIHAVTLPAIFIAGF. H24 serves as a coordination point for heme.

It belongs to the PsbE/PsbF family. Heterodimer of an alpha subunit and a beta subunit. PSII is composed of 1 copy each of membrane proteins PsbA, PsbB, PsbC, PsbD, PsbE, PsbF, PsbH, PsbI, PsbJ, PsbK, PsbL, PsbM, PsbT, PsbX, PsbY, Psb30/Ycf12, peripheral proteins PsbO, CyanoQ (PsbQ), PsbU, PsbV and a large number of cofactors. It forms dimeric complexes. It depends on heme b as a cofactor.

The protein resides in the cellular thylakoid membrane. Functionally, this b-type cytochrome is tightly associated with the reaction center of photosystem II (PSII). PSII is a light-driven water:plastoquinone oxidoreductase that uses light energy to abstract electrons from H(2)O, generating O(2) and a proton gradient subsequently used for ATP formation. It consists of a core antenna complex that captures photons, and an electron transfer chain that converts photonic excitation into a charge separation. This Prochlorococcus marinus (strain MIT 9211) protein is Cytochrome b559 subunit alpha.